The primary structure comprises 556 residues: 2-succinyl-5-enolpyruvyl-6-hydroxy-3-cyclohexene-1-carboxylate synthase (556 aa).

This sequence belongs to the TPP enzyme family. MenD subfamily. Homodimer. Mg(2+) is required as a cofactor. It depends on Mn(2+) as a cofactor. Thiamine diphosphate serves as cofactor.

It catalyses the reaction isochorismate + 2-oxoglutarate + H(+) = 5-enolpyruvoyl-6-hydroxy-2-succinyl-cyclohex-3-ene-1-carboxylate + CO2. It functions in the pathway quinol/quinone metabolism; 1,4-dihydroxy-2-naphthoate biosynthesis; 1,4-dihydroxy-2-naphthoate from chorismate: step 2/7. The protein operates within quinol/quinone metabolism; menaquinone biosynthesis. Its function is as follows. Catalyzes the thiamine diphosphate-dependent decarboxylation of 2-oxoglutarate and the subsequent addition of the resulting succinic semialdehyde-thiamine pyrophosphate anion to isochorismate to yield 2-succinyl-5-enolpyruvyl-6-hydroxy-3-cyclohexene-1-carboxylate (SEPHCHC). This is 2-succinyl-5-enolpyruvyl-6-hydroxy-3-cyclohexene-1-carboxylate synthase from Escherichia coli (strain K12 / MC4100 / BW2952).